The primary structure comprises 1114 residues: Transcriptional repressor NF-X1 (1114 aa).

Residues 9–26 (GTFKFNTDAAEFIPQERK) are interaction with PABPC1 and PABC4. Disordered regions lie at residues 20–220 (FIPQ…CRKP), 232–287 (QRRY…PTKS), and 299–325 (KSSR…FPRG). Residues Ser-50, Ser-81, Ser-92, Ser-126, Ser-130, and Ser-147 each carry the phosphoserine modification. 2 stretches are compositionally biased toward polar residues: residues 72 to 103 (SYAS…NQPW) and 121 to 142 (LSEQ…SGTN). Composition is skewed to basic and acidic residues over residues 143 to 156 (PREH…KEVV), 185 to 202 (LRSE…DENT), 232 to 248 (QRRY…EGAR), and 304 to 315 (VNQEKTAVRRQD). Ser-320 bears the Phosphoserine mark. The segment at 352–403 (CMVCCELVQVTAPVWSCQSCFHVFHLNCIKKWARSPASHADGQSGWRCPACQ) adopts an RING-type; atypical zinc-finger fold. NF-X1-type zinc fingers lie at residues 447–465 (CPHS…PCPA), 500–519 (CGQH…PCRI), 561–580 (CGSH…PCPR), 626–649 (CGSS…PCSR), 688–707 (CGRH…KCPL), 715–734 (CGLH…TCWQ), 826–848 (CGMH…ACKQ), and 857–878 (CGHP…ACKA). Residues 988–1056 (LKFVSDVEKE…KRNVVVTAVR (69 aa)) form the R3H domain. Residues 1071 to 1095 (ERETQTRPPPPIPHHRHQADKAPGS) form a disordered region.

This sequence belongs to the NFX1 family. In terms of assembly, interacts with PABPC1 and PABPC4. Ubiquitously expressed, with highest levels in thymus.

The protein localises to the nucleus. In terms of biological role, binds to the X-box motif of MHC class II genes and represses their expression. May play an important role in regulating the duration of an inflammatory response by limiting the period in which MHC class II molecules are induced by interferon-gamma. Together with PABPC1 or PABPC4, acts as a coactivator for TERT expression. Mediates E2-dependent ubiquitination. The sequence is that of Transcriptional repressor NF-X1 (Nfx1) from Mus musculus (Mouse).